The sequence spans 74 residues: Conotoxin VnMEKL-0222 (74 aa).

A signal peptide spans 1-19; that stretch reads MEKLTILLLVAAVLMSTQA. Residues 20 to 46 constitute a propeptide that is removed on maturation; the sequence is LIQEKRPKEKIKFLSKRKSIPESWWEG. 3 disulfide bridges follow: C48/C62, C55/C66, and C61/C71.

The protein belongs to the conotoxin O2 superfamily. As to expression, expressed by the venom duct.

It localises to the secreted. The chain is Conotoxin VnMEKL-0222 from Conus ventricosus (Mediterranean cone).